A 308-amino-acid polypeptide reads, in one-letter code: tRNA pseudouridine synthase B (308 aa).

Catalysis depends on aspartate 47, which acts as the Nucleophile.

The protein belongs to the pseudouridine synthase TruB family. Type 1 subfamily.

It carries out the reaction uridine(55) in tRNA = pseudouridine(55) in tRNA. In terms of biological role, responsible for synthesis of pseudouridine from uracil-55 in the psi GC loop of transfer RNAs. The sequence is that of tRNA pseudouridine synthase B from Xanthomonas axonopodis pv. citri (strain 306).